The sequence spans 256 residues: Hydroxyacylglutathione hydrolase (256 aa).

The Zn(2+) site is built by histidine 56, histidine 58, aspartate 60, histidine 61, histidine 114, aspartate 133, and histidine 171.

Belongs to the metallo-beta-lactamase superfamily. Glyoxalase II family. Monomer. The cofactor is Zn(2+).

It catalyses the reaction an S-(2-hydroxyacyl)glutathione + H2O = a 2-hydroxy carboxylate + glutathione + H(+). It participates in secondary metabolite metabolism; methylglyoxal degradation; (R)-lactate from methylglyoxal: step 2/2. Functionally, thiolesterase that catalyzes the hydrolysis of S-D-lactoyl-glutathione to form glutathione and D-lactic acid. This Rhodobacter capsulatus (Rhodopseudomonas capsulata) protein is Hydroxyacylglutathione hydrolase.